Consider the following 82-residue polypeptide: Cobrotoxin-b (82 aa).

The N-terminal stretch at Met-1 to Thr-21 is a signal peptide. 4 disulfides stabilise this stretch: Cys-24–Cys-44, Cys-38–Cys-61, Cys-63–Cys-74, and Cys-75–Cys-80.

Belongs to the three-finger toxin family. Short-chain subfamily. Type I alpha-neurotoxin sub-subfamily. As to expression, expressed by the venom gland.

It localises to the secreted. Binds to muscle nicotinic acetylcholine receptor (nAChR) and inhibit acetylcholine from binding to the receptor, thereby impairing neuromuscular transmission. Produces peripheral paralysis by blocking neuromuscular transmission at the postsynaptic site. Has a lower toxicity than cobrotoxin. In Naja atra (Chinese cobra), this protein is Cobrotoxin-b.